A 364-amino-acid polypeptide reads, in one-letter code: Valine dehydrogenase (364 aa).

K91 is a catalytic residue. Residue 191–197 (GVGKVGH) participates in NAD(+) binding.

The protein belongs to the Glu/Leu/Phe/Val dehydrogenases family. In terms of assembly, homodimer.

The protein resides in the cytoplasm. The catalysed reaction is L-valine + NAD(+) + H2O = 3-methyl-2-oxobutanoate + NH4(+) + NADH + H(+). It functions in the pathway amino-acid degradation; L-valine degradation. With respect to regulation, repressed in minimal medium by the presence of glucose and NH4(+), glycerol and NH4(+), or glycerol and asparagine. In terms of biological role, oxidative deamination of branched-chain amino acids. Oxidizes L-valine and L-alpha-aminobutyric acid efficiently, and L-isoleucine and L-leucine less efficiently. Does not act on D-valine. The catabolism of L-valine is the major source of fatty acid precursors for macrolide biosynthesis and a vital source of antibiotic precursors. Uses NAD; no activity was found with NADP. In Streptomyces coelicolor (strain ATCC BAA-471 / A3(2) / M145), this protein is Valine dehydrogenase (vdh).